Reading from the N-terminus, the 288-residue chain is MQGIIIKGIAGFYYVKVEEEIYECKARGKFRLGELSPIVGDKVDITVINGKGVIEKIHPRTNKLIRPPVSNVTQAFIVFSIVNPEFSSDLLNKFLILCEFNNIKVKVCINKIDLVNEELLTPIKNLLNNTGYELKFLNAKSKIGINELKESLKDNITVVCGPSGVGKSTLMNSIAGSNVMKTGDISEKLKRGKNTTRHSELIEVAGGFIVDTPGFSSLDLNFIDRYELKDLFPEFYEYNGSCKYSTCVHDKEPGCEVKKAVEEGNINIERYNFYVDTLNKLSVRRNYK.

The 158-residue stretch at threonine 61–leucine 218 folds into the CP-type G domain. GTP contacts are provided by residues asparagine 110–aspartate 113 and glycine 161–threonine 169. Zn(2+)-binding residues include cysteine 242, cysteine 247, histidine 249, and cysteine 255.

It belongs to the TRAFAC class YlqF/YawG GTPase family. RsgA subfamily. In terms of assembly, monomer. Associates with 30S ribosomal subunit, binds 16S rRNA. Zn(2+) serves as cofactor.

It is found in the cytoplasm. Its function is as follows. One of several proteins that assist in the late maturation steps of the functional core of the 30S ribosomal subunit. Helps release RbfA from mature subunits. May play a role in the assembly of ribosomal proteins into the subunit. Circularly permuted GTPase that catalyzes slow GTP hydrolysis, GTPase activity is stimulated by the 30S ribosomal subunit. The sequence is that of Small ribosomal subunit biogenesis GTPase RsgA from Clostridium acetobutylicum (strain ATCC 824 / DSM 792 / JCM 1419 / IAM 19013 / LMG 5710 / NBRC 13948 / NRRL B-527 / VKM B-1787 / 2291 / W).